Reading from the N-terminus, the 3010-residue chain is Genome polyprotein (3010 aa).

Position 2 is an N-acetylserine; by host (Ser2). Residues 2-23 (STNPKPQRKTKRNTNRRPQDVK) are interaction with STAT1. An interaction with EIF2AK2/PKR region spans residues 2–58 (STNPKPQRKTKRNTNRRPQDVKFPGGGQIVGGVYLLPRRGPRLGVRATRKTSERSQP). The interaction with DDX3X stretch occupies residues 2-59 (STNPKPQRKTKRNTNRRPQDVKFPGGGQIVGGVYLLPRRGPRLGVRATRKTSERSQPR). Positions 2–75 (STNPKPQRKT…PKARQPEGRA (74 aa)) are disordered. Over 2–168 (STNPKPQRKT…EDGVNYATGN (167 aa)) the chain is Cytoplasmic. Short sequence motifs (nuclear localization signal) lie at residues 5–13 (PKPQRKTKR) and 38–43 (PRRGPR). Residues 7-16 (PQRKTKRNTN) are compositionally biased toward basic residues. The span at 32-47 (GGVYLLPRRGPRLGVR) shows a compositional bias: low complexity. Ser53 carries the phosphoserine; by host modification. 2 short sequence motifs (nuclear localization signal) span residues 58–64 (PRGRRQP) and 66–71 (PKARQP). Ser99 carries the phosphoserine; by host modification. The interval 112–152 (PRRRSRNLGKVIDTLTCGFADLMGYIPLVGAPLGGAARALA) is important for endoplasmic reticulum and mitochondrial localization. Position 116 is a phosphoserine; by host PKA (Ser116). An interaction with APOA2 region spans residues 122–173 (VIDTLTCGFADLMGYIPLVGAPLGGAARALAHGVRVLEDGVNYATGNLPGCS). An important for lipid droplets localization region spans residues 164–167 (YATG). The helical transmembrane segment at 169–189 (LPGCSFSIFLLALLSCLTIPA) threads the bilayer. Positions 178 to 191 (LLALLSCLTIPASA) are cleaved as a propeptide — ER anchor for the core protein, removed in mature form by host signal peptidase. Residues 190-358 (SAYEVRNVSG…AGAHWGVLAG (169 aa)) lie on the Lumenal side of the membrane. Asn196, Asn209, Asn234, and Asn250 each carry an N-linked (GlcNAc...) asparagine; by host glycan. The tract at residues 265–296 (LVGAAALCSAMYVGDLCGSVFLVAQLFTFSPR) is important for fusion. N-linked (GlcNAc...) asparagine; by host glycosylation is present at Asn305. A helical transmembrane segment spans residues 359 to 379 (LAYYSMVGNWAKVLIVMLLFA). At 380 to 725 (GVDGGTYVTG…WEYVLLLFLL (346 aa)) the chain is on the lumenal side. The segment at 385–411 (TYVTGGTMAKNTLGITSLFSPGSSQKI) is HVR1. N-linked (GlcNAc...) asparagine; by host glycosylation occurs at Asn417. N-linked (GlcNAc...) (high mannose) asparagine; by host glycans are attached at residues Asn423, Asn430, and Asn448. Intrachain disulfides connect Cys429–Cys552, Cys452–Cys459, Cys486–Cys494, and Cys503–Cys508. Residues 474 to 482 (YNESHSSDQ) form an HVR2 region. The interval 480–493 (SDQRPYCWHYAPRP) is CD81-binding 1. N-linked (GlcNAc...) (high mannose) asparagine; by host glycosylation occurs at Asn532. Residues 544–551 (PPQGNWFG) form a CD81-binding 2 region. The N-linked (GlcNAc...) (high mannose) asparagine; by host glycan is linked to Asn556. Cys564 and Cys569 form a disulfide bridge. Asn576 carries an N-linked (GlcNAc...) (high mannose) asparagine; by host glycan. 3 cysteine pairs are disulfide-bonded: Cys581–Cys585, Cys597–Cys620, and Cys607–Cys644. Residues Asn623 and Asn645 are each glycosylated (N-linked (GlcNAc...) (high mannose) asparagine; by host). Cys652 and Cys677 form a disulfide bridge. The EIF2AK2/eIF2-alpha phosphorylation homology domain (PePHD) stretch occupies residues 660 to 671 (SELSPLLLSTTE). Residues 726–746 (LADARVCACLWMMLLIAQAEA) traverse the membrane as a helical segment. At 747–757 (ALENLVVLNAA) the chain is on the lumenal side. The helical transmembrane segment at 758–778 (SVAGAHGILSFLVFFCAAWYI) threads the bilayer. Residues 779 to 781 (KGR) lie on the Cytoplasmic side of the membrane. The helical transmembrane segment at 782-803 (LVPGAAYALYGVWPLLLLLLAL) threads the bilayer. Residues 804 to 813 (PPRAYAMDRE) are Lumenal-facing. Residues 814 to 834 (MAASCGGAVFVGLILLTLSPH) traverse the membrane as a helical segment. Topologically, residues 835–838 (YKLF) are cytoplasmic. The helical transmembrane segment at 839–859 (LARLIWWLQYFITRAEAHLQV) threads the bilayer. Residues 860-881 (WIPPLNVRGGRDAVILLTCAIH) are Lumenal-facing. Residues 882–902 (PELIFTITKILLAILGPLMVL) traverse the membrane as a helical segment. In terms of domain architecture, Peptidase C18 spans 903–1026 (QAGITKVPYF…SLEGQGWRLL (124 aa)). Over 903 to 1657 (QAGITKVPYF…CMSADLEVVT (755 aa)) the chain is Cytoplasmic. Residues 904–1206 (AGITKVPYFV…PVESMETTMR (303 aa)) form a protease NS2-3 region. Residue Cys922 is the site of S-palmitoyl cysteine; by host attachment. The interval 929–949 (AGGHYVQMALMKLAALTGTYV) is interaction with host SCPS1. Active-site for protease NS2 activity; shared with dimeric partner residues include His952, Glu972, and Cys993. One can recognise a Peptidase S29 domain in the interval 1027 to 1208 (APITAYSQQT…ESMETTMRSP (182 aa)). Catalysis depends on charge relay system; for serine protease NS3 activity residues His1083 and Asp1107. Residues Cys1123 and Cys1125 each contribute to the Zn(2+) site. Ser1165 functions as the Charge relay system; for serine protease NS3 activity in the catalytic mechanism. Zn(2+) contacts are provided by Cys1171 and His1175. Residues 1217–1369 (PAVPQTFQVA…PNIEEVALSS (153 aa)) form the Helicase ATP-binding domain. 1230–1237 (APTGSGKS) serves as a coordination point for ATP. Mg(2+) is bound by residues Ser1237 and Glu1317. Positions 1316–1319 (DECH) match the DECH box motif. Residues 1486-1497 (QRRGRTGRGRMG) form an RNA-binding region. A helical membrane pass occupies residues 1658–1678 (STWVLVGGVLAALAAYCLTTG). The interval 1679–1690 (SVVIVGRIILSG) is NS3-binding. Residues 1679–1805 (SVVIVGRIIL…SITSPLTTQH (127 aa)) are Cytoplasmic-facing. Residues 1806 to 1826 (TLLFNILGGWVAAQLAPPSAA) traverse the membrane as a helical segment. Residues 1827-1828 (SA) are Lumenal-facing. The helical transmembrane segment at 1829–1849 (FVGAGIAGAAVGSIGLGKVLV) threads the bilayer. The glycine zipper stretch occupies residues 1833–1861 (GIAGAAVGSIGLGKVLVDILAGYGAGVAG). Position 1850 (Asp1850) is a topological domain, cytoplasmic. Residues 1851 to 1871 (ILAGYGAGVAGALVAFKVMSG) traverse the membrane as a helical segment. Topologically, residues 1872–1881 (EMPSTEDLVN) are lumenal. A helical membrane pass occupies residues 1882–1902 (LLPAILSPGALVVGVVCAAIL). Residues 1903–1972 (RRHVGPGEGA…WINEDCSTPC (70 aa)) lie on the Cytoplasmic side of the membrane. S-palmitoyl cysteine; by host attachment occurs at residues Cys1968 and Cys1972. An intramembrane segment occupies 1973–2003 (SGSWLRDVWDWICTVLTDFKTWLQSKLLPRL). Positions 1978–1998 (RDVWDWICTVLTDFKTWLQSK) are membrane-binding. Over 2004–2989 (PGVPFFSCQR…YHSLSRARPR (986 aa)) the chain is Cytoplasmic. Residues 2005-2221 (GVPFFSCQRG…KATCTTRHDS (217 aa)) form an RNA-binding region. Residues Cys2011, Cys2029, Cys2031, and Cys2052 each contribute to the Zn(2+) site. Residues 2120–2208 (EFFTEVDGVR…ASSSASQLSA (89 aa)) form an FKBP8-binding region. Residues 2120-2332 (EFFTEVDGVR…PIPPPRRKRT (213 aa)) are transcriptional activation. The interval 2135–2139 (PACKP) is interaction with non-structural protein 4A. Residues 2187 to 2219 (KRRLARGSPPSLASSSASQLSAPSLKATCTTRH) form a disordered region. Positions 2189–2441 (RLARGSPPSL…PCAAEETKLP (253 aa)) are interaction with host SKP2. The residue at position 2194 (Ser2194) is a Phosphoserine; by host; in p56. Residues 2194 to 2211 (SPPSLASSSASQLSAPSL) are compositionally biased toward low complexity. Phosphoserine; by host; in p58 is present on Ser2197. Phosphoserine; by host; in p56 and p58, regulates intracellular NS5A distribution is present on Ser2201. Phosphoserine; by host; in p58 occurs at positions 2204, 2207, and 2210. ISDR regions lie at residues 2206-2245 (LSAP…TRVE) and 2210-2249 (SLKA…SENK). Residues 2210–2275 (SLKATCTTRH…REVSVPAEIL (66 aa)) form an EIF2AK2/PKR-binding region. Residues 2249–2306 (KVVILDSFEPLQAEEDEREVSVPAEILRRSRKFPRAMPIWARPDYNPPLLESWKDPDY) are NS4B-binding. The SH3-binding motif lies at 2322–2325 (PPIP). Positions 2326 to 2334 (PPRRKRTVV) match the Nuclear localization signal motif. The interval 2332–2441 (TVVLSESTVS…PCAAEETKLP (110 aa)) is interaction with host IFI27. A Glycyl lysine isopeptide (Lys-Gly) (interchain with G-Cter in ubiquitin) cross-link involves residue Lys2350. The span at 2351-2371 (TFGSSESSAVDSGTATASPDQ) shows a compositional bias: polar residues. A disordered region spans residues 2351–2407 (TFGSSESSAVDSGTATASPDQPSDDGDAGSDVESYSSMPPLEGEPGDPDLSDGSWST). Positions 2354 to 2377 (SSESSAVDSGTATASPDQPSDDGD) are V3. Phosphoserine; by host is present on residues Ser2448 and Ser2461. The 119-residue stretch at 2633 to 2751 (PMGFAYDTRC…ICESAGTQED (119 aa)) folds into the RdRp catalytic domain. The Mg(2+) site is built by Asp2639, Asp2737, and Asp2738. Residues 2990–3010 (WFMWCLLLLSVGVGIYLLPNR) traverse the membrane as a helical segment.

Belongs to the hepacivirus polyprotein family. Homooligomer. Interacts with E1 (via C-terminus). Interacts with the non-structural protein 5A. Interacts (via N-terminus) with host STAT1 (via SH2 domain); this interaction results in decreased STAT1 phosphorylation and ubiquitin-mediated proteasome-dependent STAT1 degradation, leading to decreased IFN-stimulated gene transcription. Interacts with host STAT3; this interaction constitutively activates STAT3. Interacts with host LTBR receptor. Interacts with host TNFRSF1A receptor and possibly induces apoptosis. Interacts with host HNRPK. Interacts with host YWHAE. Interacts with host UBE3A/E6AP. Interacts with host DDX3X. Interacts with host APOA2. Interacts with host RXRA protein. Interacts with host SP110 isoform 3/Sp110b; this interaction sequesters the transcriptional corepressor SP110 away from the nucleus. Interacts with host CREB3 nuclear transcription protein; this interaction triggers cell transformation. Interacts with host ACY3. Interacts with host C1QR1. Interacts with host RBM24; this interaction, which enhances the interaction of the mature core protein with 5'-UTR, may inhibit viral translation and favor replication. Interacts with host EIF2AK2/PKR; this interaction induces the autophosphorylation of EIF2AK2. Part of the viral assembly initiation complex composed of NS2, E1, E2, NS3, NS4A, NS5A and the mature core protein. In terms of assembly, forms a heterodimer with envelope glycoprotein E2. Interacts with mature core protein. Interacts with protease NS2. The heterodimer E1/E2 interacts with host CLDN1; this interaction plays a role in viral entry into host cell. Interacts with host SPSB2 (via C-terminus). Part of the viral assembly initiation complex composed of NS2, E1, E2, NS3, NS4A, NS5A and the mature core protein. Interacts with human PLSCR1. Interacts with host NEURL3; this interaction prevents E1 binding to glycoprotein E2. As to quaternary structure, forms a heterodimer with envelope glycoprotein E1. Interacts with host CD81 and SCARB1 receptors; these interactions play a role in viral entry into host cell. Interacts with host EIF2AK2/PKR; this interaction inhibits EIF2AK2 and probably allows the virus to evade the innate immune response. Interacts with host CD209/DC-SIGN and CLEC4M/DC-SIGNR. Interact with host SPCS1; this interaction is essential for viral particle assembly. Interacts with protease NS2. The heterodimer E1/E2 interacts with host CLDN1; this interaction plays a role in viral entry into host cell. Part of the viral assembly initiation complex composed of NS2, E1, E2, NS3, NS4A, NS5A and the mature core protein. Interacts with host SLC3A2/4F2hc; the interaction may facilitate viral entry into host cell. Interacts with human PLSCR1. Homohexamer. Homoheptamer. Interacts with protease NS2. In terms of assembly, homodimer. Interacts with host SPCS1; this interaction is essential for viral particle assembly. Interacts with envelope glycoprotein E1. Interacts with envelope glycoprotein E2. Interacts with viroporin p7. Interacts with serine protease/helicase NS3. Part of the replication complex composed of NS2, NS3, NS4A, NS4B, NS5A and the RNA-directed RNA polymerase embedded in an ER-derived membranous web. Part of the viral assembly initiation complex composed of NS2, E1, E2, NS3, NS4A, NS5A and the mature core protein. As to quaternary structure, interacts with protease NS2. Interacts with non-structural protein 4A; this interaction stabilizes the folding of NS3 serine protease. NS3-NS4A interaction is essential for NS3 activation and allows membrane anchorage of the latter. NS3/NS4A complex also prevents phosphorylation of host IRF3, thus preventing the establishment of dsRNA induced antiviral state. Interacts with host MAVS; this interaction leads to the cleavage and inhibition of host MAVS. Interacts with host TICAM1; this interaction leads to the cleavage and inhibition of host TICAM1. Interacts with host TANK-binding kinase/TBK1; this interaction results in the inhibition of the association between TBK1 and IRF3, which leads to the inhibition of IRF3 activation. Interacts with host RBM24. Part of the replication complex composed of NS2, NS3, NS4A, NS4B, NS5A and the RNA-directed RNA polymerase embedded in an ER-derived membranous web. Part of the viral assembly initiation complex composed of NS2, E1, E2, NS3, NS4A, NS5A and the mature core protein. Monomer. Homodimer; dimerization is required for RNA-binding. Interacts with the mature core protein. Interacts with host GRB2. Interacts with host BIN1. Interacts with host PIK3R1. Interacts with host SRCAP. Interacts with host FKBP8. Interacts with host VAPB. Interacts with host EIF2AK2/PKR; this interaction leads to disruption of EIF2AK2 dimerization by NS5A and probably allows the virus to evade the innate immune response. Interacts (via N-terminus) with host PACSIN2 (via N-terminus); this interaction attenuates protein kinase C alpha-mediated phosphorylation of PACSIN2 by disrupting the interaction between PACSIN2 and PRKCA. Interacts (via N-terminus) with host SRC kinase (via SH2 domain). Interacts with most Src-family kinases. Interacts with host IFI27 and SKP2; promotes the ubiquitin-mediated proteasomal degradation of NS5A. Interacts (via N-terminus) with non-structural protein 4A. Interacts with non-structural protein 4B. Interacts with RNA-directed RNA polymerase. Part of the replication complex composed of NS2, NS3, NS4A, NS4B, NS5A and the RNA-directed RNA polymerase embedded in an ER-derived membranous web. Interacts with host GPS2. Interacts with host TNFRSF21; this interaction allows the modulation by the virus of JNK, p38 MAPK, STAT3, and Akt signaling pathways in a DR6-dependent manner. Interacts (via N-terminus) with host CIDEB (via N-terminus); this interaction seems to regulate the association of HCV particles with APOE. Interacts with host CHKA/Choline Kinase-alpha; CHKA bridges host PI4KA and NS5A and potentiates NS5A-stimulated PI4KA activity, which then facilitates the targeting of the ternary complex to the ER for viral replication. Interacts with host SPSB2 (via C-terminus); this interaction targets NS5A for ubiquitination and degradation. Part of the viral assembly initiation complex composed of NS2, E1, E2, NS3, NS4A, NS5A and the mature core protein. Requires Zn(2+) as cofactor. It depends on Mg(2+) as a cofactor. Post-translationally, specific enzymatic cleavages in vivo yield mature proteins. The structural proteins, core, E1, E2 and p7 are produced by proteolytic processing by host signal peptidases. The core protein precursor is synthesized as a 23 kDa, which is retained in the ER membrane through the hydrophobic signal peptide. Cleavage by the signal peptidase releases the 21 kDa mature core protein. The cleavage of the core protein precursor occurs between aminoacids 176 and 188 but the exact cleavage site is not known. Some degraded forms of the core protein appear as well during the course of infection. The other proteins (p7, NS2, NS3, NS4A, NS4B, NS5A and NS5B) are cleaved by the viral proteases. Autoprocessing between NS2 and NS3 is mediated by the NS2 cysteine protease catalytic domain and regulated by the NS3 N-terminal domain. Phosphorylated by host PKC and PKA. In terms of processing, ubiquitinated; mediated by UBE3A and leading to core protein subsequent proteasomal degradation. Post-translationally, highly N-glycosylated. Palmitoylation is required for NS2/3 autoprocessing and E2 recruitment to membranes. In terms of processing, palmitoylated. This modification may play a role in its polymerization or in protein-protein interactions. Post-translationally, cleaved by host caspases which are probably activated by the viral infection. Ubiquitinated. Ubiquitination, most probably at Lys-2350, mediated by host IFI27 and SKP2 leads to proteasomal degradation, restricting viral infection. Ubiquitination by host TRIM22 leads to interruption of viral replication. In terms of processing, phosphorylated on serines in a basal form termed p56. p58 is a hyperphosphorylated form of p56. p56 and p58 coexist in the cell in roughly equivalent amounts. Hyperphosphorylation is dependent on the presence of NS4A. Host CSNK1A1/CKI-alpha or RPS6KB1 kinases may be responsible for NS5A phosphorylation. Post-translationally, tyrosine phosphorylation is essential for the interaction with host SRC. The N-terminus is phosphorylated by host PRK2/PKN2.

It localises to the host endoplasmic reticulum membrane. The protein resides in the host mitochondrion membrane. Its subcellular location is the virion. It is found in the host cytoplasm. The protein localises to the host nucleus. It localises to the host lipid droplet. The protein resides in the virion membrane. Its subcellular location is the host mitochondrion. It is found in the host cell membrane. The protein localises to the host perinuclear region. It carries out the reaction Hydrolysis of four peptide bonds in the viral precursor polyprotein, commonly with Asp or Glu in the P6 position, Cys or Thr in P1 and Ser or Ala in P1'.. It catalyses the reaction a ribonucleoside 5'-triphosphate + H2O = a ribonucleoside 5'-diphosphate + phosphate + H(+). The enzyme catalyses ATP + H2O = ADP + phosphate + H(+). The catalysed reaction is RNA(n) + a ribonucleoside 5'-triphosphate = RNA(n+1) + diphosphate. Inhibited by the antiviral drug hexamethylene amiloride. Inhibition by amantadine appears to be genotype-dependent. Also inhibited by long-alkyl-chain iminosugar derivatives. With respect to regulation, activity is up-regulated by PRK2/PKN2-mediated phosphorylation. Functionally, packages viral RNA to form a viral nucleocapsid, and promotes virion budding. Participates in the viral particle production as a result of its interaction with the non-structural protein 5A. Binds RNA and may function as a RNA chaperone to induce the RNA structural rearrangements taking place during virus replication. Modulates viral translation initiation by interacting with viral IRES and 40S ribosomal subunit. Affects various cell signaling pathways, host immunity and lipid metabolism. Prevents the establishment of cellular antiviral state by blocking the interferon-alpha/beta (IFN-alpha/beta) and IFN-gamma signaling pathways and by blocking the formation of phosphorylated STAT1 and promoting ubiquitin-mediated proteasome-dependent degradation of STAT1. Activates STAT3 leading to cellular transformation. Regulates the activity of cellular genes, including c-myc and c-fos. May repress the promoter of p53, and sequester CREB3 and SP110 isoform 3/Sp110b in the cytoplasm. Represses cell cycle negative regulating factor CDKN1A, thereby interrupting an important check point of normal cell cycle regulation. Targets transcription factors involved in the regulation of inflammatory responses and in the immune response: suppresses NF-kappa-B activation, and activates AP-1. Binds to dendritic cells (DCs) via C1QR1, resulting in down-regulation of T-lymphocytes proliferation. Alters lipid metabolism by interacting with hepatocellular proteins involved in lipid accumulation and storage. Induces up-regulation of FAS promoter activity, and thereby contributes to the increased triglyceride accumulation in hepatocytes (steatosis). Its function is as follows. Forms a heterodimer with envelope glycoprotein E2, which mediates virus attachment to the host cell, virion internalization through clathrin-dependent endocytosis and fusion with host membrane. Fusion with the host cell is most likely mediated by both E1 and E2, through conformational rearrangements of the heterodimer required for fusion rather than a classical class II fusion mechanism. E1/E2 heterodimer binds host apolipoproteins such as APOB and APOE thereby forming a lipo-viro-particle (LVP). APOE associated to the LVP allows the initial virus attachment to cell surface receptors such as the heparan sulfate proteoglycans (HSPGs), syndecan-1 (SDC1), syndecan-1 (SDC2), the low-density lipoprotein receptor (LDLR) and scavenger receptor class B type I (SCARB1). The cholesterol transfer activity of SCARB1 allows E2 exposure and binding of E2 to SCARB1 and the tetraspanin CD81. E1/E2 heterodimer binding on CD81 activates the epithelial growth factor receptor (EGFR) signaling pathway. Diffusion of the complex E1-E2-EGFR-SCARB1-CD81 to the cell lateral membrane allows further interaction with Claudin 1 (CLDN1) and occludin (OCLN) to finally trigger HCV entry. Forms a heterodimer with envelope glycoprotein E1, which mediates virus attachment to the host cell, virion internalization through clathrin-dependent endocytosis and fusion with host membrane. Fusion with the host cell is most likely mediated by both E1 and E2, through conformational rearrangements of the heterodimer required for fusion rather than a classical class II fusion mechanism. The interaction between envelope glycoprotein E2 and host apolipoprotein E/APOE allows the proper assembly, maturation and infectivity of the viral particles. This interaction is probably promoted via the up-regulation of cellular autophagy by the virus. E1/E2 heterodimer binds host apolipoproteins such as APOB and APOE thereby forming a lipo-viro-particle (LVP). APOE associated to the LVP allows the initial virus attachment to cell surface receptors such as the heparan sulfate proteoglycans (HSPGs), syndecan-1 (SDC1), syndecan-1 (SDC2), the low-density lipoprotein receptor (LDLR) and scavenger receptor class B type I (SCARB1). The cholesterol transfer activity of SCARB1 allows E2 exposure and binding of E2 to SCARB1 and the tetraspanin CD81. E1/E2 heterodimer binding on CD81 activates the epithelial growth factor receptor (EGFR) signaling pathway. Diffusion of the complex E1-E2-EGFR-SCARB1-CD81 to the cell lateral membrane allows further interaction with Claudin 1 (CLDN1) and occludin (OCLN) to finally trigger HCV entry. Inhibits host EIF2AK2/PKR activation, preventing the establishment of an antiviral state. Viral ligand for CD209/DC-SIGN and CLEC4M/DC-SIGNR, which are respectively found on dendritic cells (DCs), and on liver sinusoidal endothelial cells and macrophage-like cells of lymph node sinuses. These interactions allow the capture of circulating HCV particles by these cells and subsequent facilitated transmission to permissive cells such as hepatocytes and lymphocyte subpopulations. The interaction between E2 and host amino acid transporter complex formed by SLC3A2 and SLC7A5/LAT1 may facilitate viral entry into host cell. In terms of biological role, ion channel protein that acts as a viroporin and plays an essential role in the assembly, envelopment and secretion of viral particles. Regulates the host cell secretory pathway, which induces the intracellular retention of viral glycoproteins and favors assembly of viral particles. Creates a pore in acidic organelles and releases Ca(2+) and H(+) in the cytoplasm of infected cells, leading to a productive viral infection. High levels of cytoplasmic Ca(2+) may trigger membrane trafficking and transport of viral ER-associated proteins to viroplasms, sites of viral genome replication. This ionic imbalance induces the assembly of the inflammasome complex, which triggers the maturation of pro-IL-1beta into IL-1beta through the action of caspase-1. Targets also host mitochondria and induces mitochondrial depolarization. In addition of its role as a viroporin, acts as a lipid raft adhesion factor. Functionally, cysteine protease required for the proteolytic auto-cleavage between the non-structural proteins NS2 and NS3. The N-terminus of NS3 is required for the function of NS2 protease (active region NS2-3). Promotes the initiation of viral particle assembly by mediating the interaction between structural and non-structural proteins. Its function is as follows. Displays three enzymatic activities: serine protease with a chymotrypsin-like fold, NTPase and RNA helicase. NS3 serine protease, in association with NS4A, is responsible for the cleavages of NS3-NS4A, NS4A-NS4B, NS4B-NS5A and NS5A-NS5B. The NS3/NS4A complex prevents phosphorylation of host IRF3, thus preventing the establishment of dsRNA induced antiviral state. The NS3/NS4A complex induces host amino acid transporter component SLC3A2, thus contributing to HCV propagation. NS3 RNA helicase binds to RNA and unwinds both dsDNA and dsRNA in the 3' to 5' direction, and likely resolves RNA complicated stable secondary structures in the template strand. Binds a single ATP and catalyzes the unzipping of a single base pair of dsRNA. Inhibits host antiviral proteins TBK1 and IRF3 thereby preventing the establishment of an antiviral state. Cleaves host MAVS/CARDIF thereby preventing the establishment of an antiviral state. Cleaves host TICAM1/TRIF, thereby disrupting TLR3 signaling and preventing the establishment of an antiviral state. Peptide cofactor which forms a non-covalent complex with the N-terminal of NS3 serine protease. The NS3/NS4A complex prevents phosphorylation of host IRF3, thus preventing the establishment of dsRNA induced antiviral state. The NS3/NS4A complex induces host amino acid transporter component SLC3A2, thus contributing to HCV propagation. In terms of biological role, induces a specific membrane alteration that serves as a scaffold for the virus replication complex. This membrane alteration gives rise to the so-called ER-derived membranous web that contains the replication complex. NS4B self-interaction contributes to its function in membranous web formation. Promotes host TRIF protein degradation in a CASP8-dependent manner thereby inhibiting host TLR3-mediated interferon signaling. Disrupts the interaction between STING and TBK1 contributing to the inhibition of interferon signaling. Functionally, phosphorylated protein that is indispensable for viral replication and assembly. Both hypo- and hyperphosphorylated states are required for the viral life cycle. The hyperphosphorylated form of NS5A is an inhibitor of viral replication. Involved in RNA-binding and especially in binding to the viral genome. Zinc is essential for RNA-binding. Participates in the viral particle production as a result of its interaction with the viral mature core protein. Its interaction with host VAPB may target the viral replication complex to vesicles. Down-regulates viral IRES translation initiation. Mediates interferon resistance, presumably by interacting with and inhibiting host EIF2AK2/PKR. Prevents BIN1-induced apoptosis. Acts as a transcriptional activator of some host genes important for viral replication when localized in the nucleus. Via the interaction with host PACSIN2, modulates lipid droplet formation in order to promote virion assembly. Modulates TNFRSF21/DR6 signaling pathway for viral propagation. Its function is as follows. RNA-dependent RNA polymerase that performs primer-template recognition and RNA synthesis during viral replication. Initiates RNA transcription/replication at a flavin adenine dinucleotide (FAD), resulting in a 5'- FAD cap on viral RNAs. In this way, recognition of viral 5' RNA by host pattern recognition receptors can be bypassed, thereby evading activation of antiviral pathways. In Hepatitis C virus genotype 1b (isolate Con1) (HCV), this protein is Genome polyprotein.